The sequence spans 539 residues: Dihydrolipoyllysine-residue acetyltransferase component 3 of pyruvate dehydrogenase complex, mitochondrial (539 aa).

Residues 1–102 (MAYASRIINH…SCLMQSARGF (102 aa)) constitute a mitochondrion transit peptide. A Lipoyl-binding domain is found at 111 to 187 (HQEIGMPSLS…QVGEVIAITV (77 aa)). The residue at position 152 (K152) is an N6-lipoyllysine. The interval 195–247 (KFKDYTPSSTADAAPTKAEPTPAPPKEEKVKQPSSPPEPKASKPSTPPTGDRV) is disordered. Residues 204 to 214 (TADAAPTKAEP) show a composition bias toward low complexity. Residues 248-285 (FASPLARKLAEDNNVPLSDIEGTGPEGRIVKADIDEYL) enclose the Peripheral subunit-binding (PSBD) domain. Residues H512 and D516 contribute to the active site.

The protein belongs to the 2-oxoacid dehydrogenase family. Requires (R)-lipoate as cofactor.

It localises to the mitochondrion matrix. The catalysed reaction is N(6)-[(R)-dihydrolipoyl]-L-lysyl-[protein] + acetyl-CoA = N(6)-[(R)-S(8)-acetyldihydrolipoyl]-L-lysyl-[protein] + CoA. Its function is as follows. The pyruvate dehydrogenase complex catalyzes the overall conversion of pyruvate to acetyl-CoA and CO(2). It contains multiple copies of three enzymatic components: pyruvate dehydrogenase (E1), dihydrolipoamide acetyltransferase (E2) and lipoamide dehydrogenase (E3). In Arabidopsis thaliana (Mouse-ear cress), this protein is Dihydrolipoyllysine-residue acetyltransferase component 3 of pyruvate dehydrogenase complex, mitochondrial.